The following is a 314-amino-acid chain: tRNA dimethylallyltransferase (314 aa).

Residue 9–16 coordinates ATP; that stretch reads GPTAVGKT. 11-16 provides a ligand contact to substrate; it reads TAVGKT. The tract at residues 34–37 is interaction with substrate tRNA; sequence DSVQ.

This sequence belongs to the IPP transferase family. Monomer. Mg(2+) serves as cofactor.

It carries out the reaction adenosine(37) in tRNA + dimethylallyl diphosphate = N(6)-dimethylallyladenosine(37) in tRNA + diphosphate. Its function is as follows. Catalyzes the transfer of a dimethylallyl group onto the adenine at position 37 in tRNAs that read codons beginning with uridine, leading to the formation of N6-(dimethylallyl)adenosine (i(6)A). The chain is tRNA dimethylallyltransferase from Desulfitobacterium hafniense (strain DSM 10664 / DCB-2).